Consider the following 343-residue polypeptide: Methionine import ATP-binding protein MetN (343 aa).

The ABC transporter domain occupies 2-241 (IKLFHINKIF…PKTPIAQAFI (240 aa)). 38-45 (GSSGAGKS) serves as a coordination point for ATP.

Belongs to the ABC transporter superfamily. Methionine importer (TC 3.A.1.24) family. As to quaternary structure, the complex is composed of two ATP-binding proteins (MetN), two transmembrane proteins (MetI) and a solute-binding protein (MetQ).

It localises to the cell inner membrane. The enzyme catalyses L-methionine(out) + ATP + H2O = L-methionine(in) + ADP + phosphate + H(+). It catalyses the reaction D-methionine(out) + ATP + H2O = D-methionine(in) + ADP + phosphate + H(+). Functionally, part of the ABC transporter complex MetNIQ involved in methionine import. Responsible for energy coupling to the transport system. The chain is Methionine import ATP-binding protein MetN from Photorhabdus laumondii subsp. laumondii (strain DSM 15139 / CIP 105565 / TT01) (Photorhabdus luminescens subsp. laumondii).